Here is a 173-residue protein sequence, read N- to C-terminus: Large ribosomal subunit protein uL10 (173 aa).

The protein belongs to the universal ribosomal protein uL10 family. As to quaternary structure, part of the ribosomal stalk of the 50S ribosomal subunit. The N-terminus interacts with L11 and the large rRNA to form the base of the stalk. The C-terminus forms an elongated spine to which L12 dimers bind in a sequential fashion forming a multimeric L10(L12)X complex.

In terms of biological role, forms part of the ribosomal stalk, playing a central role in the interaction of the ribosome with GTP-bound translation factors. This Thiobacillus denitrificans (strain ATCC 25259 / T1) protein is Large ribosomal subunit protein uL10.